The sequence spans 497 residues: Carboxylesterase (497 aa).

S185 serves as the catalytic Acyl-ester intermediate. Catalysis depends on charge relay system residues E319 and H415.

This sequence belongs to the type-B carboxylesterase/lipase family.

It localises to the secreted. It carries out the reaction a carboxylic ester + H2O = an alcohol + a carboxylate + H(+). This chain is Carboxylesterase, found in Thermobifida fusca (strain YX).